The following is a 91-amino-acid chain: ATP synthase subunit c (91 aa).

2 helical membrane passes run 4-24 (FTMC…GTGI) and 53-73 (IGLA…LIIL).

The protein belongs to the ATPase C chain family. F-type ATPases have 2 components, F(1) - the catalytic core - and F(0) - the membrane proton channel. F(1) has five subunits: alpha(3), beta(3), gamma(1), delta(1), epsilon(1). F(0) has three main subunits: a(1), b(2) and c(10-14). The alpha and beta chains form an alternating ring which encloses part of the gamma chain. F(1) is attached to F(0) by a central stalk formed by the gamma and epsilon chains, while a peripheral stalk is formed by the delta and b chains.

Its subcellular location is the cell inner membrane. In terms of biological role, f(1)F(0) ATP synthase produces ATP from ADP in the presence of a proton or sodium gradient. F-type ATPases consist of two structural domains, F(1) containing the extramembraneous catalytic core and F(0) containing the membrane proton channel, linked together by a central stalk and a peripheral stalk. During catalysis, ATP synthesis in the catalytic domain of F(1) is coupled via a rotary mechanism of the central stalk subunits to proton translocation. Functionally, key component of the F(0) channel; it plays a direct role in translocation across the membrane. A homomeric c-ring of between 10-14 subunits forms the central stalk rotor element with the F(1) delta and epsilon subunits. This chain is ATP synthase subunit c, found in Trichlorobacter lovleyi (strain ATCC BAA-1151 / DSM 17278 / SZ) (Geobacter lovleyi).